Consider the following 217-residue polypeptide: Small ribosomal subunit protein uS3c (217 aa).

One can recognise a KH type-2 domain in the interval 47–118 (IQKHVKSVSN…NLRVTLTGVI (72 aa)).

Belongs to the universal ribosomal protein uS3 family. Part of the 30S ribosomal subunit.

The protein localises to the plastid. The protein resides in the chloroplast. This Adiantum capillus-veneris (Maidenhair fern) protein is Small ribosomal subunit protein uS3c (rps3).